The following is a 338-amino-acid chain: MESGKTTIAKIIKRNEPGGRVPIWLMRQAGRSLPEYRKAVENMNNFMEICYNTDLVTELTLQPVTRFDMDAAIIFSDILIIADVLGCDVNFVRGVGPIIKPVESPKELKGPQEIETKTLPILNAIKKVRSQLPKEKSLIGFAGGPWTVASYIIEGRSSKTFSKVLNFYPSCLKEIIERITEVTIIYLIKQIEFGADVIQLFDSNAGALSEPLFKEYVIEPTKRIILAIKDRFSDFPIIGFPRSAGNLYKDYCEQTGVSAVSIDYNVPIKWAKANLNIPLQGNLDPNLLAYNKTEAIKEAKRIIDCFRDLPFIFNLGHGVLPDTPVENIAALVNLVKSY.

Substrate contacts are provided by residues 27–31 (RQAGR), Asp77, Tyr151, Ser203, and His317.

This sequence belongs to the uroporphyrinogen decarboxylase family. In terms of assembly, homodimer.

It localises to the cytoplasm. It carries out the reaction uroporphyrinogen III + 4 H(+) = coproporphyrinogen III + 4 CO2. The protein operates within porphyrin-containing compound metabolism; protoporphyrin-IX biosynthesis; coproporphyrinogen-III from 5-aminolevulinate: step 4/4. In terms of biological role, catalyzes the decarboxylation of four acetate groups of uroporphyrinogen-III to yield coproporphyrinogen-III. This Wolbachia pipientis wMel protein is Uroporphyrinogen decarboxylase.